A 574-amino-acid chain; its full sequence is Interactor of HORMAD1 protein 1 (574 aa).

A disordered region spans residues 113–133 (GLSKQFEEKKRRATDQSDSET). Basic and acidic residues predominate over residues 117 to 127 (QFEEKKRRATD). The stretch at 217 to 240 (MEMKSTLKNLEVLVVEQTKNLQQF) forms a coiled coil. 3 disordered regions span residues 267-324 (GHLK…GVWD), 372-393 (FSNLPSQRAGNGQGLMAQGASQ), and 426-457 (TEQKGRPCRKRRRGKKQQPQRSKRGGLLDRKQ). Residues 272–284 (STSQTSPSLTQSL) are compositionally biased toward low complexity. Over residues 372 to 381 (FSNLPSQRAG) the composition is skewed to polar residues. Positions 431–449 (RPCRKRRRGKKQQPQRSKR) are enriched in basic residues. S476, S569, and S570 each carry phosphoserine.

Part of the MCD recombinosome complex, at least composed of IHO1, REC114 and MEI4. Interacts with REC114. Interacts with MEI4. Interacts with HORMAD1. Interacts with ANKRD31. In terms of tissue distribution, detected in spermatocytes and testis (at protein level).

Its subcellular location is the chromosome. In terms of biological role, required for DNA double-strand breaks (DSBs) formation in unsynapsed regions during meiotic recombination. Probably acts by forming a complex with MEI4 and REC114, which activates DSBs formation in unsynapsed regions, an essential step to ensure completion of synapsis. Not required for HORMAD1 functions in pairing-independent synaptonemal complex formation, ATR recruitment to unsynapsed axes, meiotic silencing of unsynapsed chromatin (MSUC) or meiotic surveillance. The chain is Interactor of HORMAD1 protein 1 from Mus musculus (Mouse).